A 235-amino-acid polypeptide reads, in one-letter code: Small ribosomal subunit protein uS2 (235 aa).

It belongs to the universal ribosomal protein uS2 family.

The protein is Small ribosomal subunit protein uS2 of Synechococcus sp. (strain RCC307).